The following is a 508-amino-acid chain: MTEPTQPQAAVAADENQIVAERRDKLRALRDQGIAYPNDFQPTHHAAGLQTEYADADKEALDAKALDVAVAGRMMLKRVMGKASFATVQDGSGQIQFFVTPADVGAETYDAFKKWDLGDIVAARGVLFRTNKGELSVKCTELRLLAKALRPLPDKFHGLADQETRYRQRYVDLIVTPETRATFRARTKAIASIRKFMSDADFMEVETPMLHPIPGGAAAKPFVTHHNALDMQMFLRIAPELYLKRLIVGGFERVFEINRNFRNEGVSPRHNPEFTMMEFYAAYTDYRWLMDFTERLIRQAAVDALGTATIRYQGRELDLAKPFHRLTITQAIQKYAPNYTDGQLSDDAFLRGELKRLGVDVTQPAFLNAGIGALQLALFEETAEAQLWEPTFIIDYPIEVSPLARESDTVAGITERFELFVTGREIANGFSELNDPEDQAARFRKQVEQKDAGDEEAMFFDADYIRALEYGMPPTGGCGIGIDRLVMLLTDSPTIRDVLLFPHLRRED.

Glu418 and Glu425 together coordinate Mg(2+).

This sequence belongs to the class-II aminoacyl-tRNA synthetase family. In terms of assembly, homodimer. The cofactor is Mg(2+).

Its subcellular location is the cytoplasm. The enzyme catalyses tRNA(Lys) + L-lysine + ATP = L-lysyl-tRNA(Lys) + AMP + diphosphate. The polypeptide is Lysine--tRNA ligase (Burkholderia mallei (strain NCTC 10247)).